A 94-amino-acid chain; its full sequence is C-X-C motif chemokine 11 (94 aa).

An N-terminal signal peptide occupies residues 1 to 21 (MSVKGMAIALAVILCATVVQG). Arg-27 carries the citrulline; by PAD2 modification. Disulfide bonds link Cys-30–Cys-57 and Cys-32–Cys-74.

Interacts with TNFAIP6 (via Link domain). As to expression, high levels in peripheral blood leukocytes, pancreas and liver astrocytes. Moderate levels in thymus, spleen and lung. Low levels in placenta, prostate and small intestine. Also found in epidermal basal layer keratinocytes in skin disorders.

The protein localises to the secreted. In terms of biological role, chemotactic for interleukin-activated T-cells but not unstimulated T-cells, neutrophils or monocytes. Induces calcium release in activated T-cells. Binds to CXCR3. May play an important role in CNS diseases which involve T-cell recruitment. May play a role in skin immune responses. This chain is C-X-C motif chemokine 11 (CXCL11), found in Homo sapiens (Human).